The primary structure comprises 1493 residues: Inactive serine/threonine-protein kinase TEX14 (1493 aa).

ANK repeat units lie at residues 27-54, 55-84, and 88-117; these read LHEYVKQGNYVKVKRILKKGIYVDAVNS, LGQTALFIAALLGLTKLVDVLVDYGADPNH, and DGSTPVHAAAFSGNQWILSKLLDAGGDLRL. The region spanning 198 to 511 is the Protein kinase domain; sequence VISAQNIYSF…IMKNDLKDFI (314 aa). ATP-binding positions include 204–212 and lysine 266; that span reads IYSFGFGKF. Residue serine 430 is modified to Phosphoserine; by PLK1. The span at 559 to 573 shows a compositional bias: polar residues; sequence GSQFHSPRGHSSPTG. Residues 559–615 form a disordered region; sequence GSQFHSPRGHSSPTGKATPEPPVPDVSPVAQQTHRQDAASPACSVAEEARNPSPDQT. Phosphoserine is present on residues serine 560 and serine 660. 2 disordered regions span residues 782 to 904 and 940 to 1081; these read HDSP…RISM and AATG…LTPD. The short motif at 789–795 is the GPPX3Y element; that stretch reads GPPASSY. A D-box motif is present at residues 846-854; sequence KASLERDRN. 2 stretches are compositionally biased toward polar residues: residues 855 to 904 and 1001 to 1020; these read QNTS…RISM and CGQTDSSDQRGRQSGPQRFT. Residues 1026–1037 are compositionally biased toward basic and acidic residues; it reads PPREDEQPEHSE. The span at 1053-1064 shows a compositional bias: polar residues; it reads YSGQSAQSTCSP. Residues 1066–1075 show a composition bias toward acidic residues; it reads SSEDTEDMTD. Phosphoserine is present on serine 1100. The segment at 1115–1167 is disordered; sequence RPQASGEEKFQMRKNLGKNSEILTKSQFQPIRSPEGEQDETLKEPPKEVKEKD. Positions 1131 to 1144 are enriched in polar residues; it reads GKNSEILTKSQFQP. A compositionally biased stretch (basic and acidic residues) spans 1154-1167; that stretch reads ETLKEPPKEVKEKD. Serine 1262 carries the post-translational modification Phosphoserine. Disordered regions lie at residues 1288–1307 and 1341–1466; these read GAGSSSIAKAPDTSRCATQR and KGQQ…EEEE. Polar residues predominate over residues 1343 to 1362; it reads QQVSSTALDENTASRPGSTE. The segment covering 1363 to 1380 has biased composition (basic and acidic residues); that stretch reads NDQRHLEEQETHSNKEDS. At serine 1400 the chain carries Phosphoserine. The segment covering 1426–1456 has biased composition (basic and acidic residues); that stretch reads PAREASSKDQEVGEKKRKGEESTKPEKRKPE. Serine 1492 is modified (phosphoserine).

This sequence belongs to the protein kinase superfamily. As to quaternary structure, interacts with KIF23 and RBM44. Interacts with CEP55; inhibiting interaction between CEP55 and PDCD6IP/ALIX and TSG101. In terms of processing, phosphorylated on Thr residues by CDK1 during early phases of mitosis, promoting the interaction with PLK1 and recruitment to kinetochores. Phosphorylated on Ser-430 by PLK1 during late prometaphase promotes the rapid depletion from kinetochores and its subsequent degradation by the APC/C complex.

The protein resides in the cytoplasm. Its subcellular location is the midbody. It is found in the chromosome. It localises to the centromere. The protein localises to the kinetochore. Its function is as follows. Required both for the formation of intercellular bridges during meiosis and for kinetochore-microtubule attachment during mitosis. Intercellular bridges are evolutionarily conserved structures that connect differentiating germ cells and are required for spermatogenesis and male fertility. Acts by promoting the conversion of midbodies into intercellular bridges via its interaction with CEP55: interaction with CEP55 inhibits the interaction between CEP55 and PDCD6IP/ALIX and TSG101, blocking cell abscission and leading to transform midbodies into intercellular bridges. Also plays a role during mitosis: recruited to kinetochores by PLK1 during early mitosis and regulates the maturation of the outer kinetochores and microtubule attachment. Has no protein kinase activity in vitro. The protein is Inactive serine/threonine-protein kinase TEX14 (TEX14) of Bos taurus (Bovine).